The sequence spans 271 residues: Phosphoglycerate mutase-like protein (271 aa).

Histidine 22 (tele-phosphohistidine intermediate) is an active-site residue. The Proton donor/acceptor role is filled by glutamate 134. The interval 252-271 (SAETTNYPGKVPEGLDNPSG) is disordered.

This sequence belongs to the phosphoglycerate mutase family. Expressed in the shoot apical meristem and meristematic zone of the root tips.

Its function is as follows. May play a role in carbohydrates metabolism. This chain is Phosphoglycerate mutase-like protein, found in Arabidopsis thaliana (Mouse-ear cress).